The following is a 252-amino-acid chain: MLIGSHVSPQDPLAAAQAEGAEVVQIFLGNPQSWKAPRPREDAAQLKAAALPIYVHAPYLINLASANNKVRIPSRKILQQTCDAAADIGAAAVIVHGGHVADDNDLDEGFQRWRKALDQLQTDVPVYLENTAGGEHAMARHFDTIARLWDVIGDTGIGFCLDTCHAWAAGEQLVHGVDRIKAVTGRIDLVHCNDSRDAAGSGRDRHANLGAGQIDPELLVAAVRAADAPIICETAEEGRKDDIAFLREKLNS.

Positions 56, 96, 129, 162, 165, 191, 204, 206, and 233 each coordinate Zn(2+).

Belongs to the AP endonuclease 2 family. Zn(2+) serves as cofactor.

It catalyses the reaction Endonucleolytic cleavage to 5'-phosphooligonucleotide end-products.. Its function is as follows. Endonuclease IV plays a role in DNA repair. It cleaves phosphodiester bonds at apurinic or apyrimidinic (AP) sites, generating a 3'-hydroxyl group and a 5'-terminal sugar phosphate. The polypeptide is Probable endonuclease 4 (Mycobacterium ulcerans (strain Agy99)).